The sequence spans 91 residues: Teretoxin Tan6.2 (91 aa).

An N-terminal signal peptide occupies residues 1-21 (MATSGRLLCVCLVLGLVFGSL). Residues 22 to 50 (GYPVMEKKRAGKNFDLGTIANWAWQIGEK) constitute a propeptide that is removed on maturation.

Belongs to the teretoxin M (TM) superfamily. Post-translationally, contains 3 disulfide bonds. In terms of tissue distribution, expressed by the venom duct.

It localises to the secreted. The polypeptide is Teretoxin Tan6.2 (Terebra anilis (Auger snail)).